Here is a 226-residue protein sequence, read N- to C-terminus: Small ribosomal subunit protein uS5 (226 aa).

The tract at residues 1–71 (MEDIKHNKKP…RKNEKRTKSE (71 aa)) is disordered. Over residues 24 to 54 (ANPQANHANPNNRSASVNNNSVNNNKKNSSR) the composition is skewed to low complexity. Positions 72–135 (FEEKIVKISR…KMAENNVQKI (64 aa)) constitute an S5 DRBM domain.

Belongs to the universal ribosomal protein uS5 family. As to quaternary structure, part of the 30S ribosomal subunit. Contacts proteins S4 and S8.

Functionally, with S4 and S12 plays an important role in translational accuracy. In terms of biological role, located at the back of the 30S subunit body where it stabilizes the conformation of the head with respect to the body. This chain is Small ribosomal subunit protein uS5, found in Mycoplasmoides gallisepticum (strain R(low / passage 15 / clone 2)) (Mycoplasma gallisepticum).